The chain runs to 962 residues: Cohesin subunit psc3 (962 aa).

The segment at 1–72 (MSESVTTGSD…GVNVKRSRRN (72 aa)) is disordered. The span at 21-30 (VMLSQSFDPM) shows a compositional bias: polar residues. Over residues 51–71 (SSKKRHPRPNSKGVNVKRSRR) the composition is skewed to basic residues. Residues 236–275 (LCEKSKELLNEHAIATKQLEKEEKRSRVNRNRINELNNSL) are a coiled coil. Residues 297 to 382 (FVHRYRDVEP…SRFKERILEM (86 aa)) enclose the SCD domain.

It belongs to the SCC3 family. As to quaternary structure, cohesin complexes are composed of the psm1/smc1 and psm3/smc3 heterodimer attached via their hinge domain, rad21/scc1 which link them, and psc3/scc3, which interacts with rad21. Interacts with swi6. The interaction with swi6 may contribute to recruit cohesin complex to heterochromatin.

It localises to the nucleus. The protein resides in the chromosome. It is found in the centromere. Component of cohesin complex, a complex required for the cohesion of sister chromatids after DNA replication. The cohesin complex apparently forms a large proteinaceous ring within which sister chromatids can be trapped. At anaphase, the rad21 subunit of the cohesin complex is cleaved and dissociates from chromatin, allowing sister chromatids to segregate. The cohesin complex may also play a role in spindle pole assembly during mitosis. In Schizosaccharomyces pombe (strain 972 / ATCC 24843) (Fission yeast), this protein is Cohesin subunit psc3 (psc3).